The following is a 253-amino-acid chain: 5-oxoprolinase subunit A (253 aa).

The protein belongs to the LamB/PxpA family. As to quaternary structure, forms a complex composed of PxpA, PxpB and PxpC.

It carries out the reaction 5-oxo-L-proline + ATP + 2 H2O = L-glutamate + ADP + phosphate + H(+). Its function is as follows. Catalyzes the cleavage of 5-oxoproline to form L-glutamate coupled to the hydrolysis of ATP to ADP and inorganic phosphate. This Bacillus cereus (strain ATCC 14579 / DSM 31 / CCUG 7414 / JCM 2152 / NBRC 15305 / NCIMB 9373 / NCTC 2599 / NRRL B-3711) protein is 5-oxoprolinase subunit A.